The sequence spans 620 residues: MSKSKCSVGLMSSVVAPAKEPNAMGPKEVELILVKEQNGVQLTSSTLTNPRQSPVEAQDRETWGKKIDFLLSVIGFAVDLANVWRFPYLCYKNGGGAFLVPYLLFMVIAGMPLFYMELALGQFNREGAAGVWKICPVLKGVGFTVILISLYVGFFYNVIIAWALHYLFSSFTTELPWIHCNNSWNSPNCSDAHSGDSGGNGPGLNDTFGTTPAAEYFERGVLHLHQSHGIDDLGPPRWQLTACLVLVIVLLYFSLWKGVKTSGKVVWITATMPYVVLTALLLRGVTLPGAIDGIRAYLSVDFYRLCEASVWIDAATQVCFSLGVGFGVLIAFSSYNKFTNNCYRDAIVTTSINSLTSFSSGFVVFSFLGYMAQKHSVPIGDVAKDGPGLIFIIYPEAIATLPLSSAWAVVFFIMLLTLGIDSAMGGMESVITGLIDEFQLLHRHRELFTLFIVLATFLLSLFCVTNGGIYVFTLLDHFAAGTSILFGVLIEAIGVAWFYGVGQFSDDIQQMTGQRPSLYWRLCWKLVSPCFLLFVVVVSIVTFRPPHYGAYIFPDWANALGWVIATSSMAMVPIYAAYKFCSLPGSFREKLAYAIAPEKDRELVDRGEVRQFTLRHWLKV.

The Cytoplasmic segment spans residues 1–56; it reads MSKSKCSVGLMSSVVAPAKEPNAMGPKEVELILVKEQNGVQLTSSTLTNPRQSPVE. A discontinuously helical transmembrane segment spans residues 57–95; sequence AQDRETWGKKIDFLLSVIGFAVDLANVWRFPYLCYKNGG. Residues glycine 75, alanine 77, valine 78, aspartate 79, and asparagine 82 each coordinate Na(+). Aspartate 79 is a dopamine binding site. 2 helical membrane-spanning segments follow: residues 96–127 and 128–171; these read GAFLVPYLLFMVIAGMPLFYMELALGQFNREG and AAGV…FSSF. Dopamine is bound by residues serine 149 and glycine 153. Topologically, residues 172–236 are extracellular; sequence TTELPWIHCN…SHGIDDLGPP (65 aa). A disulfide bridge links cysteine 180 with cysteine 189. N-linked (GlcNAc...) asparagine glycosylation is found at asparagine 181, asparagine 188, and asparagine 205. Helical transmembrane passes span 237–256 and 257–287; these read RWQLTACLVLVIVLLYFSLW and KGVKTSGKVVWITATMPYVVLTALLLRGVTL. Topologically, residues 288 to 306 are extracellular; that stretch reads PGAIDGIRAYLSVDFYRLC. The chain crosses the membrane as a discontinuously helical span at residues 307 to 335; that stretch reads EASVWIDAATQVCFSLGVGFGVLIAFSSY. A chloride-binding site is contributed by glutamine 317. Phenylalanine 320 is a binding site for dopamine. Residues serine 321 and asparagine 353 each coordinate Na(+). Serine 321 provides a ligand contact to chloride. A helical membrane pass occupies residues 336–376; that stretch reads NKFTNNCYRDAIVTTSINSLTSFSSGFVVFSFLGYMAQKHS. Serine 357 serves as a coordination point for chloride. Over 377 to 400 the chain is Extracellular; sequence VPIGDVAKDGPGLIFIIYPEAIAT. The next 3 helical transmembrane spans lie at 401–442, 443–466, and 467–499; these read LPLS…QLLH, RHRELFTLFIVLATFLLSLFCVTN, and GGIYVFTLLDHFAAGTSILFGVLIEAIGVAWFY. Na(+) contacts are provided by leucine 418, aspartate 421, and serine 422. Dopamine contacts are provided by serine 422 and alanine 423. Residues 500–516 lie on the Cytoplasmic side of the membrane; it reads GVGQFSDDIQQMTGQRP. The helical transmembrane segment at 517 to 542 threads the bilayer; the sequence is SLYWRLCWKLVSPCFLLFVVVVSIVT. The Extracellular segment spans residues 543–553; it reads FRPPHYGAYIF. A helical membrane pass occupies residues 554-583; that stretch reads PDWANALGWVIATSSMAMVPIYAAYKFCSL. An interaction with TGFB1I1 region spans residues 561 to 590; it reads GWVIATSSMAMVPIYAAYKFCSLPGSFREK. Over 584–620 the chain is Cytoplasmic; it reads PGSFREKLAYAIAPEKDRELVDRGEVRQFTLRHWLKV.

Belongs to the sodium:neurotransmitter symporter (SNF) (TC 2.A.22) family. SLC6A3 subfamily. In terms of assembly, monomer. Homooligomer; disulfide-linked. Interacts with PRKCABP and TGFB1I1. Interacts (via N-terminus) with SYNGR3 (via N-terminus). Interacts with SLC18A2. Interacts with TOR1A (ATP-bound); TOR1A regulates SLC6A3 subcellular location. Interacts with alpha-synuclein/SNCA. Interacts with SEPTIN4.

Its subcellular location is the cell membrane. It localises to the cell projection. The protein localises to the neuron projection. It is found in the axon. It catalyses the reaction dopamine(out) + chloride(out) + Na(+)(out) = dopamine(in) + chloride(in) + Na(+)(in). It carries out the reaction (R)-noradrenaline(out) + chloride(out) + Na(+)(out) = (R)-noradrenaline(in) + chloride(in) + Na(+)(in). The catalysed reaction is dopamine(out) + chloride(out) + 2 Na(+)(out) = dopamine(in) + chloride(in) + 2 Na(+)(in). With respect to regulation, inhibited by zinc ions. Functionally, mediates sodium- and chloride-dependent transport of dopamine. Also mediates sodium- and chloride-dependent transport of norepinephrine (also known as noradrenaline). Regulator of light-dependent retinal hyaloid vessel regression, downstream of OPN5 signaling. The polypeptide is Sodium-dependent dopamine transporter (SLC6A3) (Macaca fascicularis (Crab-eating macaque)).